A 338-amino-acid polypeptide reads, in one-letter code: Aspartate carbamoyltransferase catalytic subunit (338 aa).

R59 and T60 together coordinate carbamoyl phosphate. K87 serves as a coordination point for L-aspartate. Residues R109, H142, and Q145 each coordinate carbamoyl phosphate. Residues R182 and R253 each coordinate L-aspartate. 2 residues coordinate carbamoyl phosphate: G294 and P295.

This sequence belongs to the aspartate/ornithine carbamoyltransferase superfamily. ATCase family. In terms of assembly, heterododecamer (2C3:3R2) of six catalytic PyrB chains organized as two trimers (C3), and six regulatory PyrI chains organized as three dimers (R2).

It carries out the reaction carbamoyl phosphate + L-aspartate = N-carbamoyl-L-aspartate + phosphate + H(+). It functions in the pathway pyrimidine metabolism; UMP biosynthesis via de novo pathway; (S)-dihydroorotate from bicarbonate: step 2/3. Functionally, catalyzes the condensation of carbamoyl phosphate and aspartate to form carbamoyl aspartate and inorganic phosphate, the committed step in the de novo pyrimidine nucleotide biosynthesis pathway. The polypeptide is Aspartate carbamoyltransferase catalytic subunit (Prochlorococcus marinus (strain MIT 9301)).